Reading from the N-terminus, the 449-residue chain is Phosphoglucosamine mutase (449 aa).

The active-site Phosphoserine intermediate is S102. The Mg(2+) site is built by S102, D243, D245, and D247. Position 102 is a phosphoserine (S102).

This sequence belongs to the phosphohexose mutase family. The cofactor is Mg(2+). Post-translationally, activated by phosphorylation.

It catalyses the reaction alpha-D-glucosamine 1-phosphate = D-glucosamine 6-phosphate. Functionally, catalyzes the conversion of glucosamine-6-phosphate to glucosamine-1-phosphate. The protein is Phosphoglucosamine mutase of Maricaulis maris (strain MCS10) (Caulobacter maris).